Here is a 235-residue protein sequence, read N- to C-terminus: Probable transglycosylase IsaA (235 aa).

Residues 1-28 (MKKTVIASTLAVSLGIAGYGLSGHEAHA) form the signal peptide. The segment covering 95-115 (ESSSNQEVSANTQSSNTNVQA) has biased composition (polar residues). The interval 95-150 (ESSSNQEVSANTQSSNTNVQAVSAPTSSESRSYSTSTTSYSAPSHNYSSHSSSVRL) is disordered. Residues 117-147 (SAPTSSESRSYSTSTTSYSAPSHNYSSHSSS) show a composition bias toward low complexity.

This sequence belongs to the transglycosylase family. IsaA subfamily.

Its subcellular location is the secreted. Is able to cleave peptidoglycan. This is Probable transglycosylase IsaA (isaA) from Staphylococcus epidermidis (strain ATCC 35984 / DSM 28319 / BCRC 17069 / CCUG 31568 / BM 3577 / RP62A).